Reading from the N-terminus, the 871-residue chain is Translation initiation factor IF-2 (871 aa).

Disordered regions lie at residues 60–101 (KKNI…QEVK) and 184–203 (ESLK…KKES). Over residues 61-72 (KNIKTPTAKKPK) the composition is skewed to basic residues. The span at 73–101 (KENIKEQEKLNESEKKEPKKEEKLKQEVK) shows a compositional bias: basic and acidic residues. Residues 370–537 (TRAPVITIMG…IVLLQADILE (168 aa)) enclose the tr-type G domain. The segment at 379–386 (GHVDHGKT) is G1. Residue 379–386 (GHVDHGKT) participates in GTP binding. A G2 region spans residues 404-408 (GITQH). Residues 425 to 428 (DTPG) are G3. GTP contacts are provided by residues 425–429 (DTPGH) and 479–482 (NKMD). The segment at 479-482 (NKMD) is G4. A G5 region spans residues 515–517 (SAK).

The protein belongs to the TRAFAC class translation factor GTPase superfamily. Classic translation factor GTPase family. IF-2 subfamily.

It is found in the cytoplasm. In terms of biological role, one of the essential components for the initiation of protein synthesis. Protects formylmethionyl-tRNA from spontaneous hydrolysis and promotes its binding to the 30S ribosomal subunits. Also involved in the hydrolysis of GTP during the formation of the 70S ribosomal complex. The chain is Translation initiation factor IF-2 from Campylobacter jejuni subsp. jejuni serotype O:6 (strain 81116 / NCTC 11828).